A 145-amino-acid chain; its full sequence is 3-dehydroquinate dehydratase (145 aa).

Tyrosine 22 functions as the Proton acceptor in the catalytic mechanism. Residues asparagine 71, histidine 77, and aspartate 84 each contribute to the substrate site. The active-site Proton donor is histidine 97. Residues leucine 98–serine 99 and arginine 108 contribute to the substrate site.

The protein belongs to the type-II 3-dehydroquinase family. Homododecamer.

The catalysed reaction is 3-dehydroquinate = 3-dehydroshikimate + H2O. It functions in the pathway metabolic intermediate biosynthesis; chorismate biosynthesis; chorismate from D-erythrose 4-phosphate and phosphoenolpyruvate: step 3/7. In terms of biological role, catalyzes a trans-dehydration via an enolate intermediate. The polypeptide is 3-dehydroquinate dehydratase (Francisella tularensis subsp. mediasiatica (strain FSC147)).